A 129-amino-acid chain; its full sequence is Large ribosomal subunit protein bL17 (129 aa).

The protein belongs to the bacterial ribosomal protein bL17 family. As to quaternary structure, part of the 50S ribosomal subunit. Contacts protein L32.

The chain is Large ribosomal subunit protein bL17 from Desulfotalea psychrophila (strain LSv54 / DSM 12343).